Here is a 316-residue protein sequence, read N- to C-terminus: Olfactory receptor 5P79 (316 aa).

Topologically, residues Met1 to Val28 are extracellular. The N-linked (GlcNAc...) asparagine glycan is linked to Asn8. The chain crosses the membrane as a helical span at residues Val29 to Ile49. The Cytoplasmic segment spans residues Leu50–Gln57. Residues Leu58–Ser78 form a helical membrane-spanning segment. At Ser79 to Ile102 the chain is on the extracellular side. Cys100 and Cys192 are disulfide-bonded. The chain crosses the membrane as a helical span at residues Gln103–Tyr123. Over Asp124–Ser136 the chain is Cytoplasmic. A helical transmembrane segment spans residues Thr137 to Leu157. Topologically, residues Asn158–Leu199 are extracellular. Residues Ile200 to Ser220 traverse the membrane as a helical segment. Over Tyr221 to Ala240 the chain is Cytoplasmic. Residues Phe241 to Ile261 traverse the membrane as a helical segment. Over Tyr262–Asn274 the chain is Extracellular. Residues Lys275 to Leu297 form a helical membrane-spanning segment. Topologically, residues Arg298 to Ser316 are cytoplasmic.

The protein belongs to the G-protein coupled receptor 1 family.

The protein resides in the cell membrane. Potential odorant receptor. In Mus musculus (Mouse), this protein is Olfactory receptor 5P79.